The primary structure comprises 142 residues: Large ribosomal subunit protein uL13 (142 aa).

It belongs to the universal ribosomal protein uL13 family. Part of the 50S ribosomal subunit.

This protein is one of the early assembly proteins of the 50S ribosomal subunit, although it is not seen to bind rRNA by itself. It is important during the early stages of 50S assembly. This is Large ribosomal subunit protein uL13 from Vibrio parahaemolyticus serotype O3:K6 (strain RIMD 2210633).